The chain runs to 2946 residues: Neurobeachin (2946 aa).

Residues 971–995 (ENIKKGKKGNVSTISGLSSQTTGAK) are disordered. Residues 980 to 993 (NVSTISGLSSQTTG) show a composition bias toward polar residues. Phosphoserine occurs at positions 1011 and 1014. A WD 1 repeat occupies 1326–1368 (TTMFRIPEFKWSPMHQRLLTDLLFALETDVHVWRSHSTKSVMD). Disordered regions lie at residues 1490 to 1531 (QRDR…LSPI), 1651 to 1675 (TIKE…HTDS), 1711 to 1731 (VKKS…PATS), and 1841 to 1860 (GAVD…VNGA). The span at 1497-1517 (SSHGSSKPQEVPQSVTATAAS) shows a compositional bias: polar residues. S1529 bears the Phosphoserine mark. Residues S1714 and S1717 each carry the phosphoserine modification. The span at 1716 to 1731 (ESLTENPSETLKPATS) shows a compositional bias: polar residues. Positions 1845–1855 (SGSSSSSSSSS) are enriched in low complexity. Phosphoserine is present on S2138. Residues 2147–2255 (NLAGPVVLST…TVKKVVYSLP (109 aa)) enclose the BEACH-type PH domain. Residues 2274 to 2563 (ATPRQLYKSS…QLLIEPHPPR (290 aa)) form the BEACH domain. The residue at position 2575 (S2575) is a Phosphoserine. WD repeat units follow at residues 2718–2761 (GHWD…HIIG), 2778–2818 (GHDH…RALE), 2860–2899 (EIND…QLYI), and 2902–2941 (GCDA…WHYE).

The protein belongs to the WD repeat neurobeachin family. Interacts with RII subunit of PKA. As to expression, predominant in many brain structures. Also expressed at medium levels in spleen, thymus, prostate, testis and ovary. Low level expression is seen in heart, kidney, pancreas, skeletal muscle and intestine.

Its subcellular location is the cytoplasm. The protein localises to the membrane. Binds to type II regulatory subunits of protein kinase A and anchors/targets them to the membrane. May anchor the kinase to cytoskeletal and/or organelle-associated proteins. In Homo sapiens (Human), this protein is Neurobeachin.